Reading from the N-terminus, the 840-residue chain is E3 ubiquitin-protein ligase SH3RF1 (840 aa).

The RING-type zinc finger occupies 12-53 (CPVCLERLDASAKVLPCQHTFCKRCLLGIVGSRNELRCPECR). A disordered region spans residues 105 to 129 (VTCSPKDGPSSQGGPQPRAQAWSPP). SH3 domains lie at 134-193 (PQLP…IIKP) and 196-259 (QPPP…FNSA). Disordered regions lie at residues 267–324 (DQPP…RHSM), 394–442 (TLNP…PRPS), 516–545 (GPASRGGVLANPPSTGGPAQKPPGNGVAGG), 578–633 (QARS…AASG), 652–723 (AASL…LGAE), and 744–773 (MAPGPQRRASSLDSAPVAPPPRQPCSSLGP). Low complexity predominate over residues 273 to 282 (GVAAGEGALA). Polar residues predominate over residues 283–292 (TTPSSTTTKQ). The interaction with RAC1 stretch occupies residues 292 to 362 (QPDGKKNTKK…APSQVHISTT (71 aa)). Serine 304 is subject to Phosphoserine. Composition is skewed to low complexity over residues 307-320 (SLSMASKASQAAQQ) and 405-424 (QAATPTGTAVAAAAGMGPRP). Residues 434 to 537 (HPRPQPRPSV…PSTGGPAQKP (104 aa)) form an interaction with AKT2 region. Residues 439 to 500 (PRPSVYVAIY…PGNYVAPVTR (62 aa)) form the SH3 3 domain. Over residues 616–625 (SPQPPAPLGP) the composition is skewed to pro residues. A compositionally biased stretch (basic and acidic residues) spans 681 to 692 (RPDKDGKKEKKG). Serine 709 carries the phosphoserine modification. Residues 781–840 (AVCERHRVVVSYPPQSEAELELKEGDIVFVHKKREDGWFKGTLQRNGKTGLFPGSFVENI) enclose the SH3 4 domain.

This sequence belongs to the SH3RF family. In terms of assembly, interacts with RAC1; in a GTP-dependent manner. Interacts with MAP3K10/MLK2 and MAP3K11/MLK3. Interacts with MAPK8IP; this interaction leads to the PJAC complex (POSH-JIP or SH3RF1/MAPK8IP apoptotic complex) with a 1:1 ratio. Interacts with SIAH1. Interacts with HERP1. Probably part of a signaling complex that may contain SH3RF1, MAPK8IP, DLK1, MAP2K4/MKK4, MAP2K7/MKK7, MAPK8/JNK1, MAPK9/JNK2, AKT1 and AKT2. Found in a complex with RAC2, MAP3K7/TAK1, MAP2K7/MKK7, MAPK8IP1/JIP1, MAPK8/JNK1 and MAPK9/JNK2. Found in a complex with RAC1, MAP3K11/MLK3, MAP2K7/MKK7, MAPK8IP1/JIP1 and MAPK8/JNK1. Interacts with SH3RF2. Phosphorylated at Ser-304 by AKT1 and AKT2. When phosphorylated, it has reduced ability to bind Rac. Post-translationally, autoubiquitinated. Ubiquitinated by SH3RF2, leading to proteasome-mediated degradation.

Its subcellular location is the cytoplasm. It localises to the perinuclear region. The protein localises to the cell projection. The protein resides in the lamellipodium. It is found in the golgi apparatus. Its subcellular location is the trans-Golgi network. The catalysed reaction is S-ubiquitinyl-[E2 ubiquitin-conjugating enzyme]-L-cysteine + [acceptor protein]-L-lysine = [E2 ubiquitin-conjugating enzyme]-L-cysteine + N(6)-ubiquitinyl-[acceptor protein]-L-lysine.. It participates in protein modification; protein ubiquitination. Its function is as follows. Has E3 ubiquitin-protein ligase activity. In the absence of an external substrate, it can catalyze self-ubiquitination. Stimulates ubiquitination of potassium channel KCNJ1, enhancing it's dynamin-dependent and clathrin-independent endocytosis. Acts as a scaffold protein that coordinates with MAPK8IP1/JIP1 in organizing different components of the JNK pathway, including RAC1 or RAC2, MAP3K11/MLK3 or MAP3K7/TAK1, MAP2K7/MKK7, MAPK8/JNK1 and/or MAPK9/JNK2 into a functional multiprotein complex to ensure the effective activation of the JNK signaling pathway. Regulates the differentiation of CD4(+) and CD8(+) T-cells and promotes T-helper 1 (Th1) cell differentiation. Regulates the activation of MAPK8/JNK1 and MAPK9/JNK2 in CD4(+) T-cells and the activation of MAPK8/JNK1 in CD8(+) T-cells. Plays a crucial role in the migration of neocortical neurons in the developing brain. Controls proper cortical neuronal migration and the formation of proximal cytoplasmic dilation in the leading process (PCDLP) in migratory neocortical neurons by regulating the proper localization of activated RAC1 and F-actin assembly. The protein is E3 ubiquitin-protein ligase SH3RF1 (SH3RF1) of Bos taurus (Bovine).